We begin with the raw amino-acid sequence, 279 residues long: NADPH-dependent 7-cyano-7-deazaguanine reductase (279 aa).

86-88 (IES) is a binding site for substrate. NADPH is bound at residue 88–89 (SK). The active-site Thioimide intermediate is the Cys187. The active-site Proton donor is the Asp194. A substrate-binding site is contributed by 226-227 (HE). 255 to 256 (RG) is a binding site for NADPH.

It belongs to the GTP cyclohydrolase I family. QueF type 2 subfamily. As to quaternary structure, homodimer.

The protein localises to the cytoplasm. It carries out the reaction 7-aminomethyl-7-carbaguanine + 2 NADP(+) = 7-cyano-7-deazaguanine + 2 NADPH + 3 H(+). Its pathway is tRNA modification; tRNA-queuosine biosynthesis. Its function is as follows. Catalyzes the NADPH-dependent reduction of 7-cyano-7-deazaguanine (preQ0) to 7-aminomethyl-7-deazaguanine (preQ1). The protein is NADPH-dependent 7-cyano-7-deazaguanine reductase of Histophilus somni (strain 129Pt) (Haemophilus somnus).